The sequence spans 68 residues: Tabimmunregulin 1 (68 aa).

The first 26 residues, 1 to 26 (MLLKSYVFFLLSLLIVGLFTSRDADA), serve as a signal peptide directing secretion. Residues 27 to 38 (QYEDLVTGYLRK) constitute a propeptide that is removed on maturation.

As to expression, expressed in salivary glands.

It is found in the secreted. Functionally, horsefly salivary gland immunosuppressant protein that likely inhibits the host inflammatory response by regulation of anti- and pro-inflammatory cytokines. When tested on mouse splenocytes in the presence of LPS, it increases the secretion of the proinflammatory cytokine interleukin-10 (IL10) and decreases the secretion of the proinflammatory cytokine interferon-gamma (IFNG) in a dose-dependent manner. In Tabanus yao (Horsefly), this protein is Tabimmunregulin 1.